Here is a 144-residue protein sequence, read N- to C-terminus: Maximins 4/H3 type 3 (144 aa).

The signal sequence occupies residues 1–18 (MNFKYIIAVSFFIASAYA). The propeptide occupies 19–43 (RTEEKDVQSLSQRDVLEEESLREIR). Position 70 is an asparagine amide (N70). Residues 74–123 (TAEDHEVMKRLEAVMRDLDSLDHPEEASERQTRGFNQEEIANLFTKKEKR) constitute a propeptide that is removed on maturation. I143 is subject to Isoleucine amide.

It belongs to the bombinin family. Expressed by the skin glands.

The protein resides in the secreted. Functionally, maximin-4 shows antibacterial activity against both Gram-positive and Gram-negative bacteria. It also shows antimicrobial activity against the fungus C.albicans, but not against A.flavus nor P.uticale. It has little hemolytic activity. It does not possess a significant cytotoxicity against tumor cell lines. It does not possess a significant anti-HIV activity. Maximin-H3 shows antibacterial activity against both Gram-positive and Gram-negative bacteria. It also shows antimicrobial activity against the fungus C.albicans. Shows strong hemolytic activity. This chain is Maximins 4/H3 type 3, found in Bombina maxima (Giant fire-bellied toad).